The following is a 422-amino-acid chain: DNA (cytosine-5)-methyltransferase 3-like (422 aa).

The segment covering 1-11 has biased composition (polar residues); it reads MGSRETPSSCS. Residues 1–50 are disordered; that stretch reads MGSRETPSSCSKTHETLNLETPESSSTDPDSPLEEQWPKSAPDLKEEDSM. Residues 20-30 are compositionally biased toward low complexity; the sequence is ETPESSSTDPD. One can recognise an ADD domain in the interval 76 to 208; that stretch reads EVNVNQRNIE…LKAFHDREGA (133 aa). The GATA-type; atypical zinc-finger motif lies at 87–117; sequence ICLCCGSLQVYAQHPLFEGGICAPCKDKFLE. The segment at 128–184 adopts a PHD-type; atypical zinc-finger fold; sequence QSYCTICCSGHTLFICESPDCTRCYCFECVDILVGPGTSERINAMACWVCFLCLPFS.

In terms of assembly, homodimer. Heterotetramer composed of 1 DNMT3A homodimer and 2 DNMT3L subunits (DNMT3L-DNMT3A-DNMT3A-DNMT3L). Interacts with histone H3 (via N-terminus); interaction is strongly inhibited by methylation at lysine 4 (H3K4me). Interacts with EZH2; the interaction is direct. Interacts with SPOCD1.

It localises to the nucleus. Catalytically inactive regulatory factor of DNA methyltransferases that can either promote or inhibit DNA methylation depending on the context. Essential for the function of DNMT3A and DNMT3B: activates DNMT3A and DNMT3B by binding to their catalytic domain. Acts by accelerating the binding of DNA and S-adenosyl-L-methionine (AdoMet) to the methyltransferases and dissociates from the complex after DNA binding to the methyltransferases. Recognizes unmethylated histone H3 lysine 4 (H3K4me0) and induces de novo DNA methylation by recruitment or activation of DNMT3. Plays a key role in embryonic stem cells and germ cells. In germ cells, required for the methylation of imprinted loci together with DNMT3A. In male germ cells, specifically required to methylate retrotransposons, preventing their mobilization. Plays a key role in embryonic stem cells (ESCs) by acting both as an positive and negative regulator of DNA methylation. While it promotes DNA methylation of housekeeping genes together with DNMT3A and DNMT3B, it also acts as an inhibitor of DNA methylation at the promoter of bivalent genes. Interacts with the EZH2 component of the PRC2/EED-EZH2 complex, preventing interaction of DNMT3A and DNMT3B with the PRC2/EED-EZH2 complex, leading to maintain low methylation levels at the promoters of bivalent genes. Promotes differentiation of ESCs into primordial germ cells by inhibiting DNA methylation at the promoter of RHOX5, thereby activating its expression. This Rattus norvegicus (Rat) protein is DNA (cytosine-5)-methyltransferase 3-like (Dnmt3l).